A 336-amino-acid chain; its full sequence is Potassium channel subfamily K member 1 (336 aa).

Residues 1–20 (MLQSLAGSSCVRLVERHRSA) are Cytoplasmic-facing. The chain crosses the membrane as a helical span at residues 21 to 41 (WCFGLLVLGYLLYLVFGAVVF). Residues 42-103 (SSVELPYEDL…SNASGNWNWD (62 aa)) are Extracellular-facing. Asparagine 95 carries an N-linked (GlcNAc...) asparagine glycan. The helical intramembrane region spans 104 to 116 (FTSALFFASTVLS). An intramembrane segment occupies 117–122 (TTGYGH). Residues 117 to 122 (TTGYGH) form a selectivity filter 1 region. The Extracellular segment spans residues 123-132 (TVPLSDGGKA). Residues 133 to 156 (FCIIYSVIGIPFTLLFLTAVVQRI) traverse the membrane as a helical segment. Residues 157–181 (TVHVTRRPVLYFHIRWGFSKQMVGI) are Cytoplasmic-facing. The chain crosses the membrane as a helical span at residues 182-202 (VHAVVLGFVTVSCFFFIPAAV). The Extracellular portion of the chain corresponds to 203–211 (FSVLEDDWN). The segment at residues 212 to 224 (FLESFYFCFISLS) is an intramembrane region (helical). Residues 225–230 (TIGLGD) are selectivity filter 2. An intramembrane segment occupies 225-231 (TIGLGDY). Residues 232 to 243 (VPGEGYNQKFRE) are Extracellular-facing. Residues 244–267 (LYKIGITCYLLLGLIAMLVVLETF) traverse the membrane as a helical segment. The Cytoplasmic segment spans residues 268–336 (CELHELKKFR…SAYAEDSASH (69 aa)). A Glycyl lysine isopeptide (Lys-Gly) (interchain with G-Cter in SUMO) cross-link involves residue lysine 274. The interval 293–299 (IVEHDQL) is important for intracellular retention in recycling endosomes.

The protein belongs to the two pore domain potassium channel (TC 1.A.1.8) family. In terms of assembly, homodimer; disulfide-linked. Heterodimer with KCNK2; disulfide-linked. In astrocytes, forms mostly heterodimeric potassium channels with KCNK2, with only a minor proportion of functional channels containing homodimeric KCNK1. Interacts with KCNK3 and KCNK9, forming functional heterodimeric channels. Interacts with GNG4. Identified in a complex with PSD and ARF6; interacts only with PSD that is bound to ARF6. Interacts with UBE2I. Sumoylation is controversial. Sumoylated by UBE2I. Not sumoylated when expressed in xenopus oocytes or mammalian cells. Sumoylation inactivates the channel, but does not interfere with expression at the cell membrane. Sumoylation of a single subunit is sufficient to silence the dimeric channel. Sumoylation of KCNK1 is sufficient to silence heterodimeric channels formed by KCNK1 and KCNK3 or KCNK9. Desumoylated by SENP1; this activates the channel. Desumoylated by SENP1; this strongly increases halothane-mediated activation of heterodimeric channels formed with KCNK9. SENP1 treatment has no effect.

It is found in the cell membrane. Its subcellular location is the recycling endosome. The protein resides in the synaptic cell membrane. The protein localises to the cytoplasmic vesicle. It localises to the perikaryon. It is found in the cell projection. Its subcellular location is the dendrite. The protein resides in the apical cell membrane. The enzyme catalyses K(+)(in) = K(+)(out). It carries out the reaction NH4(+)(in) = NH4(+)(out). The catalysed reaction is Na(+)(in) = Na(+)(out). It catalyses the reaction Rb(+)(in) = Rb(+)(out). The enzyme catalyses Cs(+)(in) = Cs(+)(out). It carries out the reaction Li(+)(in) = Li(+)(out). The catalysed reaction is L-glutamate(out) = L-glutamate(in). It catalyses the reaction chloride(in) = chloride(out). Its function is as follows. Ion channel that contributes to passive transmembrane potassium transport and to the regulation of the resting membrane potential in brain astrocytes, but also in kidney and in other tissues. Forms dimeric channels through which potassium ions pass in accordance with their electrochemical gradient. The channel is selective for K(+) ions at physiological potassium concentrations and at neutral pH, but becomes permeable to Na(+) at subphysiological K(+) levels and upon acidification of the extracellular medium. The homodimer has very low potassium channel activity, when expressed in heterologous systems, and can function as weakly inward rectifying potassium channel. Channel activity is modulated by activation of serotonin receptors. Heterodimeric channels containing KCNK1 and KCNK2 have much higher activity, and may represent the predominant form in astrocytes. Heterodimeric channels containing KCNK1 and KCNK3 or KCNK9 have much higher activity. Heterodimeric channels formed by KCNK1 and KCNK9 may contribute to halothane-sensitive currents. Mediates outward rectifying potassium currents in dentate gyrus granule cells and contributes to the regulation of their resting membrane potential. Contributes to the regulation of action potential firing in dentate gyrus granule cells and down-regulates their intrinsic excitability. In astrocytes, the heterodimer formed by KCNK1 and KCNK2 is required for rapid glutamate release in response to activation of G-protein coupled receptors, such as F2R and CNR1. Required for normal ion and water transport in the kidney. Contributes to the regulation of the resting membrane potential of pancreatic beta cells. The low channel activity of homodimeric KCNK1 may be due to sumoylation. The low channel activity may be due to rapid internalization from the cell membrane and retention in recycling endosomes. Permeable to monovalent cations with ion selectivity for K(+) &gt; Rb(+) &gt;&gt; NH4(+) &gt;&gt; Cs(+) = Na(+) = Li(+). The chain is Potassium channel subfamily K member 1 from Cavia porcellus (Guinea pig).